Consider the following 192-residue polypeptide: Threonylcarbamoyl-AMP synthase (192 aa).

The 188-residue stretch at 5–192 (TTSVAEAAHC…DATTGRVIRD (188 aa)) folds into the YrdC-like domain.

It belongs to the SUA5 family. TsaC subfamily.

Its subcellular location is the cytoplasm. The enzyme catalyses L-threonine + hydrogencarbonate + ATP = L-threonylcarbamoyladenylate + diphosphate + H2O. In terms of biological role, required for the formation of a threonylcarbamoyl group on adenosine at position 37 (t(6)A37) in tRNAs that read codons beginning with adenine. Catalyzes the conversion of L-threonine, HCO(3)(-)/CO(2) and ATP to give threonylcarbamoyl-AMP (TC-AMP) as the acyladenylate intermediate, with the release of diphosphate. This Acinetobacter baylyi (strain ATCC 33305 / BD413 / ADP1) protein is Threonylcarbamoyl-AMP synthase.